The following is a 75-amino-acid chain: DNA-directed RNA polymerase subunit omega (75 aa).

This sequence belongs to the RNA polymerase subunit omega family. As to quaternary structure, in cyanobacteria the RNAP catalytic core is composed of 2 alpha, 1 beta, 1 beta', 1 gamma and 1 omega subunit. When a sigma factor is associated with the core the holoenzyme is formed, which can initiate transcription.

It catalyses the reaction RNA(n) + a ribonucleoside 5'-triphosphate = RNA(n+1) + diphosphate. Functionally, promotes RNA polymerase assembly. Latches the N- and C-terminal regions of the beta' subunit thereby facilitating its interaction with the beta and alpha subunits. This is DNA-directed RNA polymerase subunit omega from Prochlorococcus marinus (strain MIT 9313).